The sequence spans 529 residues: Peptide chain release factor 3 (529 aa).

A tr-type G domain is found at A11–Q279. GTP contacts are provided by residues S20–T27, D88–H92, and N142–D145.

The protein belongs to the TRAFAC class translation factor GTPase superfamily. Classic translation factor GTPase family. PrfC subfamily.

Its subcellular location is the cytoplasm. Functionally, increases the formation of ribosomal termination complexes and stimulates activities of RF-1 and RF-2. It binds guanine nucleotides and has strong preference for UGA stop codons. It may interact directly with the ribosome. The stimulation of RF-1 and RF-2 is significantly reduced by GTP and GDP, but not by GMP. In Idiomarina loihiensis (strain ATCC BAA-735 / DSM 15497 / L2-TR), this protein is Peptide chain release factor 3.